Consider the following 739-residue polypeptide: MQTLFLSLLAAAVTVHAYGSGGSNWDQAYSRAKDALQKLNQTEKVGLVTGVKWMGGPCVGNTYKPESIDYPSLCLQDSPLGIRFANPVTAFPAGINAGATWDTQLLYARGAAMGAEAKGLGIHVQLGPVAGPLGKNPNGGRNWEGFSVDPYLSGVAMEKTIRGMQDSGVQACAKHWLGNEQEHYRDTISSNIGDRAAHELYVWPFMDAVKAGVASVMCSYNKVNGTWACESDALNNKLMKEELGFPGYIMSDWNAQHSTVNSAVSGLDMTMPGSDFSNPPGSIFWGSNLEAAVADGSVPQSRLDDMVTRILAAWYLVGQDQGYPPVAFSSWNGGKANVDVTADHGTVARAVARDSIVLLKNGHGTLPLRKPKSLAIVGSDAIVNPAGPNACSDRGCNNGTLAMGWGSGTAEFPYLVGPLDAIQKRAAADGTKIVPSTTDDPTAGASAAAAAETAIVFINSDSGEGYITVEGNLGDRNNLDPWHNGNELVKAVAAASKNVIVVIHSVGPIILETILAQPSVKAIVWAGLPGQESGNALVDVIYGDTTPSGKLPYTIAKQAADYGASWINAETDDFPEGLYVDYRHFDAKGIAPRYEFGYGLSYTTFKYSGLWVNMDASAGAANGQVVPGGPADLFEVVGQVSVSVRNNGRVAGAEVAQLYLGLPDSAPATPPKQLRGFQKLMLQPGQTGRATFKLTRRDLSYWDVQQQKWVVPSGTFKVYVGSSSRDIREEGSFRVRRGW.

The N-terminal stretch at 1-17 (MQTLFLSLLAAAVTVHA) is a signal peptide. Residues N40 and N224 are each glycosylated (N-linked (GlcNAc...) asparagine). D252 is an active-site residue. N398 is a glycosylation site (N-linked (GlcNAc...) asparagine).

The protein belongs to the glycosyl hydrolase 3 family.

Its subcellular location is the secreted. The enzyme catalyses Hydrolysis of terminal, non-reducing beta-D-glucosyl residues with release of beta-D-glucose.. It participates in glycan metabolism; cellulose degradation. In terms of biological role, beta-glucosidases are one of a number of cellulolytic enzymes involved in the degradation of cellulosic biomass. Catalyzes the last step releasing glucose from the inhibitory cellobiose. The sequence is that of Probable beta-glucosidase L (bglL) from Aspergillus fumigatus (strain CBS 144.89 / FGSC A1163 / CEA10) (Neosartorya fumigata).